Consider the following 353-residue polypeptide: Putative ABC transporter ATP-binding protein MG303 homolog (353 aa).

Residues 72–312 form the ABC transporter domain; sequence LYFYNLSVFV…MQLLQRYEIT (241 aa). 107–114 lines the ATP pocket; sequence GPSGSGKT.

The protein belongs to the ABC transporter superfamily.

This is Putative ABC transporter ATP-binding protein MG303 homolog from Mycoplasma pneumoniae (strain ATCC 29342 / M129 / Subtype 1) (Mycoplasmoides pneumoniae).